Here is a 354-residue protein sequence, read N- to C-terminus: 3-isopropylmalate dehydrogenase (354 aa).

NAD(+) is bound at residue 76–87; sequence GPRWDGAKERPE. Substrate-binding residues include Arg-94, Arg-104, Arg-130, and Asp-215. Positions 215, 239, and 243 each coordinate Mg(2+). Residue 273–285 participates in NAD(+) binding; that stretch reads GSAPDIAGKNKAN.

It belongs to the isocitrate and isopropylmalate dehydrogenases family. LeuB type 1 subfamily. Homodimer. It depends on Mg(2+) as a cofactor. Mn(2+) serves as cofactor.

Its subcellular location is the cytoplasm. The enzyme catalyses (2R,3S)-3-isopropylmalate + NAD(+) = 4-methyl-2-oxopentanoate + CO2 + NADH. It participates in amino-acid biosynthesis; L-leucine biosynthesis; L-leucine from 3-methyl-2-oxobutanoate: step 3/4. Its function is as follows. Catalyzes the oxidation of 3-carboxy-2-hydroxy-4-methylpentanoate (3-isopropylmalate) to 3-carboxy-4-methyl-2-oxopentanoate. The product decarboxylates to 4-methyl-2 oxopentanoate. This chain is 3-isopropylmalate dehydrogenase, found in Bacillus cereus (strain ZK / E33L).